Reading from the N-terminus, the 57-residue chain is UPF0391 membrane protein AZOSEA39630 (57 aa).

Helical transmembrane passes span 4 to 24 and 37 to 57; these read WAII…TGVA and IALA…VLVF.

This sequence belongs to the UPF0391 family.

It localises to the cell membrane. This is UPF0391 membrane protein AZOSEA39630 from Aromatoleum aromaticum (strain DSM 19018 / LMG 30748 / EbN1) (Azoarcus sp. (strain EbN1)).